The chain runs to 90 residues: Small ribosomal subunit protein uS15 (90 aa).

The protein belongs to the universal ribosomal protein uS15 family. In terms of assembly, part of the 30S ribosomal subunit. Forms a bridge to the 50S subunit in the 70S ribosome, contacting the 23S rRNA.

Functionally, one of the primary rRNA binding proteins, it binds directly to 16S rRNA where it helps nucleate assembly of the platform of the 30S subunit by binding and bridging several RNA helices of the 16S rRNA. In terms of biological role, forms an intersubunit bridge (bridge B4) with the 23S rRNA of the 50S subunit in the ribosome. The sequence is that of Small ribosomal subunit protein uS15 from Herpetosiphon aurantiacus (strain ATCC 23779 / DSM 785 / 114-95).